The primary structure comprises 58 residues: Potassium channel toxin alpha-KTx 1.6 (58 aa).

Residues 1 to 21 (MKISFLLLLAIVICSIGWTEA) form the signal peptide. Gln22 carries the post-translational modification Pyrrolidone carboxylic acid. Cystine bridges form between Cys28–Cys49, Cys34–Cys54, and Cys38–Cys56.

The protein belongs to the short scorpion toxin superfamily. Potassium channel inhibitor family. Alpha-KTx 01 subfamily. Expressed by the venom gland.

It is found in the secreted. Potent blocker of both large-conductance calcium-activated potassium channels (KCa1.1/KCNMA1) and voltage-gated potassium channels (Kv1.3/KCNA3 and ERG1/Kv11.1/KCNH2). This is Potassium channel toxin alpha-KTx 1.6 from Olivierus martensii (Manchurian scorpion).